The chain runs to 91 residues: Small ribosomal subunit protein uS19 (91 aa).

This sequence belongs to the universal ribosomal protein uS19 family.

Functionally, protein S19 forms a complex with S13 that binds strongly to the 16S ribosomal RNA. The protein is Small ribosomal subunit protein uS19 of Verminephrobacter eiseniae (strain EF01-2).